Reading from the N-terminus, the 288-residue chain is MKKIKKAIIPAAGLGTRFLPATKAMPKEMLPILDKPTIQYIVEEAARAGIEDIIIVTGRHKRAIEDHFDSQKELEMVLKEKGKSELLEKVQYSTELANIFYVRQKEQKGLGHAISSARQFIGNEPFAVLLGDDIVESEVPAVKQLIDVYEETGHSVIGVQEVPEADTHRYGIIDPLTKNGRQYEVKKFVEKPAQGTAPSNLAIMGRYVLTPEIFDYLKTQKEGAGNEIQLTDAIERMNNDNQVYAYDFEGERYDVGEKLGFVKTTIEYALKDDSMREELTRFIKALGL.

Belongs to the UDPGP type 2 family.

The catalysed reaction is alpha-D-glucose 1-phosphate + UTP + H(+) = UDP-alpha-D-glucose + diphosphate. It participates in glycolipid metabolism; diglucosyl-diacylglycerol biosynthesis. Functionally, catalyzes the formation of UDP-glucose from glucose-1-phosphate and UTP. This is an intermediate step in the biosynthesis of diglucosyl-diacylglycerol (Glc2-DAG), i.e. the predominant glycolipid found in the S.aureus membrane, which is also used as a membrane anchor for lipoteichoic acid (LTA). In Staphylococcus aureus (strain USA300), this protein is UTP--glucose-1-phosphate uridylyltransferase (gtaB).